Consider the following 111-residue polypeptide: Cystatin (111 aa).

Positions Gly-3–Trp-103 constitute a Cystatin domain. A Secondary area of contact motif is present at residues Gln-47 to Gly-51. An intrachain disulfide couples Cys-65 to Cys-81.

This sequence belongs to the cystatin family. As to expression, expressed by the venom gland.

The protein resides in the secreted. Its function is as follows. Inhibits various C1 cysteine proteases including cathepsin L, papain and cathepsin B. This protein has no toxic activity and its function in the venom is unknown. It may play a role as housekeeping or regulatory protein. This Bitis arietans (African puff adder) protein is Cystatin.